The following is a 430-amino-acid chain: Synaptotagmin-11 (430 aa).

Residues 1–15 (MAEITNIRPSFDVSP) are Vesicular-facing. Residues 16 to 36 (VAAGLIGASVLVVCVSVTVFV) form a helical membrane-spanning segment. The Cytoplasmic segment spans residues 37–430 (WTCCHQQAEK…IAKWHSLSEY (394 aa)). Residues 79–90 (RRDKDGPRRESG) are compositionally biased toward basic and acidic residues. Disordered regions lie at residues 79 to 120 (RRDK…CMDQ) and 132 to 152 (RSPM…SSPE). Serine 133 carries the phosphoserine modification. Over residues 134-150 (PMTSLTPGESKATSPSS) the composition is skewed to polar residues. C2 domains follow at residues 156–278 (MLGS…QLTR) and 290–425 (SRGE…AKWH). Residues aspartate 249, serine 252, and aspartate 255 each coordinate Ca(2+).

This sequence belongs to the synaptotagmin family. As to quaternary structure, homodimer. Can also form heterodimers. Interacts with PRKN. Interacts (via C2 2 domain) with AGO2 and SND1; the interaction with SND1 is direct. Interacts with KIF1A; the interaction increases in presence of calcium. It depends on Ca(2+) as a cofactor. Post-translationally, ubiquitinated, at least by PRKN, and targeted to the proteasome complex for degradation. Ubiquitination is inhibited by ATP13A2. As to expression, expressed in cerebellun, cerebellar cortex, hippocampus, olfactory bulb and spinal cord (at protein level). Expressed by neurons, astrocytes and microglia (at protein level). Expressed in macrophages (at protein level).

The protein resides in the cytoplasmic vesicle membrane. The protein localises to the perikaryon. Its subcellular location is the golgi apparatus. It localises to the trans-Golgi network membrane. It is found in the recycling endosome membrane. The protein resides in the lysosome membrane. The protein localises to the cytoplasmic vesicle. Its subcellular location is the phagosome. It localises to the cell projection. It is found in the axon. The protein resides in the dendrite. The protein localises to the postsynaptic density. Its subcellular location is the clathrin-coated vesicle membrane. Its function is as follows. Synaptotagmin family member involved in vesicular and membrane trafficking which does not bind Ca(2+). Inhibits clathrin-mediated and bulk endocytosis, functions to ensure precision in vesicle retrieval. Plays an important role in dopamine transmission by regulating endocytosis and the vesicle-recycling process. Essential component of a neuronal vesicular trafficking pathway that differs from the synaptic vesicle trafficking pathway but is crucial for development and synaptic plasticity. In macrophages and microglia, inhibits the conventional cytokine secretion, of at least IL6 and TNF, and phagocytosis. In astrocytes, regulates lysosome exocytosis, mechanism required for the repair of injured astrocyte cell membrane. Required for the ATP13A2-mediated regulation of the autophagy-lysosome pathway. This chain is Synaptotagmin-11, found in Mus musculus (Mouse).